An 816-amino-acid polypeptide reads, in one-letter code: Leucine--tRNA ligase (816 aa).

A 'HIGH' region motif is present at residues 40–51 (SYPSGSQLHAGH). Positions 576–580 (KMSKS) match the 'KMSKS' region motif. An ATP-binding site is contributed by lysine 579.

It belongs to the class-I aminoacyl-tRNA synthetase family.

It is found in the cytoplasm. It carries out the reaction tRNA(Leu) + L-leucine + ATP = L-leucyl-tRNA(Leu) + AMP + diphosphate. In Clostridium perfringens (strain SM101 / Type A), this protein is Leucine--tRNA ligase.